The sequence spans 396 residues: DNA dC-&gt;dU-editing enzyme APOBEC3 (396 aa).

CMP/dCMP-type deaminase domains are found at residues 38-154 and 205-324; these read GRKD…AQVA and EEEF…LCSL. His71 contacts Zn(2+). Residue Glu73 is the Proton donor of the active site. Residues Cys105, Cys108, His255, Cys283, and Cys286 each contribute to the Zn(2+) site.

It belongs to the cytidine and deoxycytidylate deaminase family. As to quaternary structure, homodimer. Requires Zn(2+) as cofactor.

It localises to the cytoplasm. The catalysed reaction is a 2'-deoxycytidine in single-stranded DNA + H2O + H(+) = a 2'-deoxyuridine in single-stranded DNA + NH4(+). Its function is as follows. DNA deaminase (cytidine deaminase) which acts as an inhibitor of retrovirus replication and retrotransposon mobility via deaminase-dependent and -independent mechanisms. Selectively targets single-stranded DNA and does not deaminate double-stranded DNA or single- or double-stranded RNA. The polypeptide is DNA dC-&gt;dU-editing enzyme APOBEC3 (APOBEC3) (Cricetulus longicaudatus (Long-tailed dwarf hamster)).